Here is a 195-residue protein sequence, read N- to C-terminus: 7-methyl-GTP pyrophosphatase (195 aa).

Asp-70 serves as the catalytic Proton acceptor.

This sequence belongs to the Maf family. YceF subfamily. Requires a divalent metal cation as cofactor.

It is found in the cytoplasm. The catalysed reaction is N(7)-methyl-GTP + H2O = N(7)-methyl-GMP + diphosphate + H(+). Nucleoside triphosphate pyrophosphatase that hydrolyzes 7-methyl-GTP (m(7)GTP). May have a dual role in cell division arrest and in preventing the incorporation of modified nucleotides into cellular nucleic acids. The polypeptide is 7-methyl-GTP pyrophosphatase (Shewanella sp. (strain MR-4)).